A 754-amino-acid chain; its full sequence is Endothelin-converting enzyme 1 (754 aa).

Over 1–52 (MMSTYKRATLDEEDLVDSLSESDVYPNHLQVNFRGPRNGQRCWAARTPVEKR) the chain is Cytoplasmic. Thr-9 is subject to Phosphothreonine. Residues 53–73 (LVVLVALLAAALVACLAVLGI) traverse the membrane as a helical; Signal-anchor for type II membrane protein segment. The Extracellular portion of the chain corresponds to 74-754 (QYQTRTPSVC…MNPHHKCEVW (681 aa)). Positions 82 to 754 (VCLSEACISV…MNPHHKCEVW (673 aa)) constitute a Peptidase M13 domain. 5 disulfides stabilise this stretch: Cys-83-Cys-88, Cys-106-Cys-739, Cys-114-Cys-699, Cys-169-Cys-419, and Cys-628-Cys-751. Asn-150, Asn-171, Asn-194, Asn-254, Asn-300, Asn-346, Asn-367, and Asn-523 each carry an N-linked (GlcNAc...) asparagine glycan. His-591 provides a ligand contact to Zn(2+). Glu-592 is an active-site residue. Residue His-595 participates in Zn(2+) binding. 2 N-linked (GlcNAc...) asparagine glycosylation sites follow: Asn-616 and Asn-635. Glu-651 is a Zn(2+) binding site. Catalysis depends on Asp-655, which acts as the Proton donor.

It belongs to the peptidase M13 family. In terms of assembly, homodimer; disulfide-linked. Interacts with PPP1R16B. Interacts with TSPAN8; this interaction recruits the endothelin converting enzyme ECE1 to tetraspanin-enriched microdomains and positively modulates its enzymatic activity. It depends on Zn(2+) as a cofactor.

It localises to the cell membrane. It carries out the reaction Hydrolysis of the 21-Trp-|-Val-22 bond in big endothelin to form endothelin 1.. Inhibited by phosphoramidon. In terms of biological role, converts big endothelin-1 to endothelin-1. This is Endothelin-converting enzyme 1 (ECE1) from Bos taurus (Bovine).